The sequence spans 2293 residues: Protein Ycf2 (2293 aa).

Gly1647–Ser1654 provides a ligand contact to ATP.

Belongs to the Ycf2 family.

It localises to the plastid. The protein localises to the chloroplast stroma. Functionally, probable ATPase of unknown function. Its presence in a non-photosynthetic plant (Epifagus virginiana) and experiments in tobacco indicate that it has an essential function which is probably not related to photosynthesis. This is Protein Ycf2 from Lobularia maritima (Sweet alyssum).